A 260-amino-acid chain; its full sequence is Triosephosphate isomerase (260 aa).

N11–K13 is a substrate binding site. Residue H103 is the Electrophile of the active site. The Proton acceptor role is filled by E175. Substrate-binding positions include G181, S220, and G241–G242.

The protein belongs to the triosephosphate isomerase family. As to quaternary structure, homodimer.

The protein resides in the cytoplasm. The catalysed reaction is D-glyceraldehyde 3-phosphate = dihydroxyacetone phosphate. The protein operates within carbohydrate biosynthesis; gluconeogenesis. It functions in the pathway carbohydrate degradation; glycolysis; D-glyceraldehyde 3-phosphate from glycerone phosphate: step 1/1. In terms of biological role, involved in the gluconeogenesis. Catalyzes stereospecifically the conversion of dihydroxyacetone phosphate (DHAP) to D-glyceraldehyde-3-phosphate (G3P). The chain is Triosephosphate isomerase from Shewanella amazonensis (strain ATCC BAA-1098 / SB2B).